We begin with the raw amino-acid sequence, 338 residues long: Fructose-1,6-bisphosphatase class 1 (338 aa).

E92, D115, L117, and D118 together coordinate Mg(2+). Substrate-binding positions include 118 to 121 (DGSS), N211, Y244, 262 to 264 (YLY), and K274. E280 contacts Mg(2+).

This sequence belongs to the FBPase class 1 family. As to quaternary structure, homotetramer. Requires Mg(2+) as cofactor.

The protein resides in the cytoplasm. The catalysed reaction is beta-D-fructose 1,6-bisphosphate + H2O = beta-D-fructose 6-phosphate + phosphate. The protein operates within carbohydrate biosynthesis; gluconeogenesis. The polypeptide is Fructose-1,6-bisphosphatase class 1 (Vibrio vulnificus (strain YJ016)).